The chain runs to 102 residues: Large ribosomal subunit protein bL21 (102 aa).

This sequence belongs to the bacterial ribosomal protein bL21 family. Part of the 50S ribosomal subunit. Contacts protein L20.

Functionally, this protein binds to 23S rRNA in the presence of protein L20. The chain is Large ribosomal subunit protein bL21 from Bacillus subtilis (strain 168).